The primary structure comprises 317 residues: MTPALKSTFVLAHRHLLGIEGLSAADITGLLDLSEEYVELNRQVDKKRASLRGRTQVNLFFEASTRTQSSFEIAGKRLGADVMNMSVSSSSMRKGETLMDTAVTLNAMHPDILVVRHHASGAVELLARKVDGSVINAGDGAHEHPTQALLDALTIRRNKGRLEGLVVAICGDVMHSRVARSNILLLNTMGARVRVVAPSTLLPRGIERMGVEVARDMREGLDGADIVMMLRLQRERMNGSFVPSSGEYFHYFGLDQKKLAYAKPDALVMHPGPMNRGVEIDSIVADGAQSVIREQVEMGVAVRMAVLEALARNLPNA.

Residues arginine 66 and threonine 67 each contribute to the carbamoyl phosphate site. Lysine 94 provides a ligand contact to L-aspartate. Carbamoyl phosphate-binding residues include arginine 116, histidine 144, and glutamine 147. L-aspartate contacts are provided by arginine 177 and arginine 231. Residues glycine 272 and proline 273 each contribute to the carbamoyl phosphate site.

Belongs to the aspartate/ornithine carbamoyltransferase superfamily. ATCase family. Heterododecamer (2C3:3R2) of six catalytic PyrB chains organized as two trimers (C3), and six regulatory PyrI chains organized as three dimers (R2).

The enzyme catalyses carbamoyl phosphate + L-aspartate = N-carbamoyl-L-aspartate + phosphate + H(+). It participates in pyrimidine metabolism; UMP biosynthesis via de novo pathway; (S)-dihydroorotate from bicarbonate: step 2/3. Its function is as follows. Catalyzes the condensation of carbamoyl phosphate and aspartate to form carbamoyl aspartate and inorganic phosphate, the committed step in the de novo pyrimidine nucleotide biosynthesis pathway. This is Aspartate carbamoyltransferase catalytic subunit from Rhodopseudomonas palustris (strain HaA2).